We begin with the raw amino-acid sequence, 343 residues long: Multidrug resistance protein MdtN (343 aa).

Residues 1–12 are Cytoplasmic-facing; the sequence is MESTPKKAPRSK. The chain crosses the membrane as a helical; Signal-anchor for type II membrane protein span at residues 13–33; sequence FPALLVVALALVALVFVIWRV. Topologically, residues 34 to 343 are periplasmic; it reads DSAPSTNDAY…ASAVANLEPQ (310 aa).

It belongs to the membrane fusion protein (MFP) (TC 8.A.1) family. As to quaternary structure, could be part of a tripartite efflux system composed of MdtN, MdtO and MdtP.

The protein resides in the cell inner membrane. Could be involved in resistance to puromycin, acriflavine and tetraphenylarsonium chloride. The polypeptide is Multidrug resistance protein MdtN (mdtN) (Escherichia coli O6:H1 (strain CFT073 / ATCC 700928 / UPEC)).